The chain runs to 670 residues: Probable Rho-GTPase-activating protein 9 (670 aa).

Residues D3–D392 form the F-BAR domain. The segment at N141–K161 is disordered. One can recognise a Rho-GAP domain in the interval S425 to F622. T640 carries the phosphothreonine modification. The span at P641–P663 shows a compositional bias: polar residues. The tract at residues P641–F670 is disordered. S645 is subject to Phosphoserine.

Its subcellular location is the cytoplasm. The chain is Probable Rho-GTPase-activating protein 9 (rga9) from Schizosaccharomyces pombe (strain 972 / ATCC 24843) (Fission yeast).